Reading from the N-terminus, the 568-residue chain is Potassium-transporting ATPase potassium-binding subunit (568 aa).

10 helical membrane-spanning segments follow: residues Thr-3–Gly-23, Phe-64–Val-84, Phe-133–Ile-153, Ile-179–Gly-199, Met-255–Tyr-275, Leu-281–Val-301, Phe-375–Ile-395, Ile-418–Ser-438, Ile-497–Leu-517, and Thr-536–Val-556.

This sequence belongs to the KdpA family. The system is composed of three essential subunits: KdpA, KdpB and KdpC.

The protein localises to the cell inner membrane. Functionally, part of the high-affinity ATP-driven potassium transport (or Kdp) system, which catalyzes the hydrolysis of ATP coupled with the electrogenic transport of potassium into the cytoplasm. This subunit binds the periplasmic potassium ions and delivers the ions to the membrane domain of KdpB through an intramembrane tunnel. This chain is Potassium-transporting ATPase potassium-binding subunit, found in Bacteroides thetaiotaomicron (strain ATCC 29148 / DSM 2079 / JCM 5827 / CCUG 10774 / NCTC 10582 / VPI-5482 / E50).